The chain runs to 150 residues: Large ribosomal subunit protein bL9 (150 aa).

It belongs to the bacterial ribosomal protein bL9 family.

Its function is as follows. Binds to the 23S rRNA. This chain is Large ribosomal subunit protein bL9, found in Colwellia psychrerythraea (strain 34H / ATCC BAA-681) (Vibrio psychroerythus).